The following is a 220-amino-acid chain: tRNA (guanine-N(7)-)-methyltransferase (220 aa).

Positions 44, 69, 96, and 118 each coordinate S-adenosyl-L-methionine. The active site involves Asp118. Lys122 is a binding site for substrate. The segment at 124 to 129 (RHEKRR) is interaction with RNA. Residues Asp154 and 191–194 (TEYE) each bind substrate.

Belongs to the class I-like SAM-binding methyltransferase superfamily. TrmB family.

It carries out the reaction guanosine(46) in tRNA + S-adenosyl-L-methionine = N(7)-methylguanosine(46) in tRNA + S-adenosyl-L-homocysteine. It participates in tRNA modification; N(7)-methylguanine-tRNA biosynthesis. Catalyzes the formation of N(7)-methylguanine at position 46 (m7G46) in tRNA. The protein is tRNA (guanine-N(7)-)-methyltransferase of Halalkalibacterium halodurans (strain ATCC BAA-125 / DSM 18197 / FERM 7344 / JCM 9153 / C-125) (Bacillus halodurans).